The chain runs to 272 residues: UPF0759 protein YecE (272 aa).

This sequence belongs to the UPF0759 family.

This is UPF0759 protein YecE (yecE) from Escherichia coli (strain K12).